The primary structure comprises 308 residues: MANTVILVDQPTLEKMKQTYLPFSNPKLPPGAVFAAKKPGVSITGYKSRKVMFQGVNGEVEAKKWVATLPESKTKAPSVSKGILPANFASKNVIGSDEVGTGDFFGPITVCAAYVDAEMMPLLKELGVKDSKAMKDPEICRIAEKIMPLVPHSVLLCPNPKYNELQKRGMNQGQMKALLHNRAIENVLKKLAPVKPEAILIDQFAEKNTYYRYLAKEPSIIREDVFFATKAEGLHLSVAAASIIARYKFVQAFDAMSKEVGIPLPKGAGPHVDAVAAEIIERFGLETLTKYTKQHFANTEKALKMVKK.

The RNase H type-2 domain occupies 91–308 (KNVIGSDEVG…TEKALKMVKK (218 aa)). The a divalent metal cation site is built by Asp-97, Glu-98, and Asp-202.

It belongs to the RNase HII family. RnhC subfamily. Requires Mn(2+) as cofactor. Mg(2+) serves as cofactor.

It is found in the cytoplasm. It catalyses the reaction Endonucleolytic cleavage to 5'-phosphomonoester.. In terms of biological role, endonuclease that specifically degrades the RNA of RNA-DNA hybrids. This chain is Ribonuclease HIII, found in Listeria monocytogenes serotype 4b (strain F2365).